We begin with the raw amino-acid sequence, 535 residues long: Phosphoenolpyruvate carboxykinase (ATP) (535 aa).

Substrate contacts are provided by Arg-59, Tyr-201, and Lys-207. Residues Lys-207, His-226, and 243-251 (GLSGTGKTT) contribute to the ATP site. Mn(2+) contacts are provided by Lys-207 and His-226. Asp-264 lines the Mn(2+) pocket. ATP is bound by residues Glu-292, Arg-328, 444–445 (RI), and Thr-450. Arg-328 contacts substrate.

This sequence belongs to the phosphoenolpyruvate carboxykinase (ATP) family. The cofactor is Mn(2+).

It is found in the cytoplasm. The catalysed reaction is oxaloacetate + ATP = phosphoenolpyruvate + ADP + CO2. It functions in the pathway carbohydrate biosynthesis; gluconeogenesis. Its function is as follows. Involved in the gluconeogenesis. Catalyzes the conversion of oxaloacetate (OAA) to phosphoenolpyruvate (PEP) through direct phosphoryl transfer between the nucleoside triphosphate and OAA. This is Phosphoenolpyruvate carboxykinase (ATP) from Bacteroides thetaiotaomicron (strain ATCC 29148 / DSM 2079 / JCM 5827 / CCUG 10774 / NCTC 10582 / VPI-5482 / E50).